The chain runs to 1328 residues: Retrovirus-related Pol polyprotein from transposon TNT 1-94 (1328 aa).

Residues 189-265 (PENQGQALIT…SGQKNDDNTA (77 aa)) form a disordered region. The segment covering 217–229 (ARGKSKNRSKSRV) has biased composition (basic residues). A CCHC-type zinc finger spans residues 230 to 247 (RNCYNCNQPGHFKRDCPN). Residues 241–253 (FKRDCPNPRKGKG) are compositionally biased toward basic and acidic residues. The active-site For protease activity is the Asp-297. The 170-residue stretch at 473-642 (SSERKLNILD…IPERVWTNKE (170 aa)) folds into the Integrase catalytic domain. Polar residues predominate over residues 729–742 (TIPSTSNNPTSAES). The interval 729–800 (TIPSTSNNPT…RVESRRYPST (72 aa)) is disordered. Residues 770 to 798 (EVEHPTQGEEQHQPLRRSERPRVESRRYP) show a composition bias toward basic and acidic residues.

The enzyme catalyses DNA(n) + a 2'-deoxyribonucleoside 5'-triphosphate = DNA(n+1) + diphosphate. The chain is Retrovirus-related Pol polyprotein from transposon TNT 1-94 from Nicotiana tabacum (Common tobacco).